An 82-amino-acid polypeptide reads, in one-letter code: MDSIISAASVIAAGLAVGLAAIGPGIGQGSAAANAVEGIARQPEVEGKIRGTLLLSLAFMESLTIYGLVVALSLLFANPYTG.

Transmembrane regions (helical) follow at residues 4–24 (IISAASVIAAGLAVGLAAIGP) and 57–77 (LAFMESLTIYGLVVALSLLFA).

Belongs to the ATPase C chain family. As to quaternary structure, F-type ATPases have 2 components, F(1) - the catalytic core - and F(0) - the membrane proton channel. F(1) has five subunits: alpha(3), beta(3), gamma(1), delta(1), epsilon(1). F(0) has four main subunits: a(1), b(1), b'(1) and c(10-14). The alpha and beta chains form an alternating ring which encloses part of the gamma chain. F(1) is attached to F(0) by a central stalk formed by the gamma and epsilon chains, while a peripheral stalk is formed by the delta, b and b' chains.

The protein localises to the plastid. The protein resides in the chloroplast thylakoid membrane. F(1)F(0) ATP synthase produces ATP from ADP in the presence of a proton or sodium gradient. F-type ATPases consist of two structural domains, F(1) containing the extramembraneous catalytic core and F(0) containing the membrane proton channel, linked together by a central stalk and a peripheral stalk. During catalysis, ATP synthesis in the catalytic domain of F(1) is coupled via a rotary mechanism of the central stalk subunits to proton translocation. Its function is as follows. Key component of the F(0) channel; it plays a direct role in translocation across the membrane. A homomeric c-ring of between 10-14 subunits forms the central stalk rotor element with the F(1) delta and epsilon subunits. The protein is ATP synthase subunit c, chloroplastic of Antithamnion sp. (Red alga).